The following is a 343-amino-acid chain: Zinc finger protein STP3 (343 aa).

Disordered regions lie at residues 31 to 56 (YNGEASSASTHPTLPNMNISNGSGSA) and 71 to 140 (SNDV…KPRK). The span at 33–45 (GEASSASTHPTLP) shows a compositional bias: polar residues. Composition is skewed to low complexity over residues 46 to 56 (NMNISNGSGSA), 71 to 86 (SNDVSRSNSSSSFLPS), and 94 to 120 (SASASETSSSASPSRSISPILKVAGPS). Ser71 and Ser111 each carry phosphoserine. The C2H2-type zinc-finger motif lies at 169–191 (HKCPICHRGFARNNDLLRHKKRH). The segment at 198 to 222 (SQSGVLSNHNDGKGGSVSPNDDDTH) is disordered.

It is found in the nucleus. The sequence is that of Zinc finger protein STP3 (STP3) from Saccharomyces cerevisiae (strain ATCC 204508 / S288c) (Baker's yeast).